Reading from the N-terminus, the 149-residue chain is Flavodoxin YqcA (149 aa).

The Flavodoxin-like domain maps to 4 to 145; sequence IGIFVGTMYG…ESNPWVEQWG (142 aa). FMN contacts are provided by residues 10–15 and 99–101; these read TMYGNS and NFC.

This sequence belongs to the flavodoxin family. MioC subfamily. Monomer. It depends on FMN as a cofactor.

Functionally, probable electron transporter. This is Flavodoxin YqcA (yqcA) from Escherichia coli (strain K12).